The primary structure comprises 38 residues: Photosystem II reaction center protein X (38 aa).

A helical membrane pass occupies residues 9–29 (ISSLTAGGLVVLTIAVALIVI).

This sequence belongs to the PsbX family. Type 1 subfamily. In terms of assembly, PSII is composed of 1 copy each of membrane proteins PsbA, PsbB, PsbC, PsbD, PsbE, PsbF, PsbH, PsbI, PsbJ, PsbK, PsbL, PsbM, PsbT, PsbX, PsbY, PsbZ, Psb30/Ycf12, at least 3 peripheral proteins of the oxygen-evolving complex and a large number of cofactors. It forms dimeric complexes.

Its subcellular location is the plastid. It localises to the chloroplast thylakoid membrane. Its function is as follows. Involved in the binding and/or turnover of quinones at the Q(B) site of photosystem II (PSII). PSII is a light-driven water plastoquinone oxidoreductase, using light energy to abstract electrons from H(2)O, generating a proton gradient subsequently used for ATP formation. The sequence is that of Photosystem II reaction center protein X from Trieres chinensis (Marine centric diatom).